Consider the following 572-residue polypeptide: Urease subunit alpha (572 aa).

The region spanning 134-572 (GGIDAHVHMI…VSLGQLYFFS (439 aa)) is the Urease domain. Ni(2+)-binding residues include H139, H141, and K222. At K222 the chain carries N6-carboxylysine. H224 is a substrate binding site. H251 and H277 together coordinate Ni(2+). H325 functions as the Proton donor in the catalytic mechanism. D365 contacts Ni(2+).

The protein belongs to the metallo-dependent hydrolases superfamily. Urease alpha subunit family. As to quaternary structure, heterotrimer of UreA (gamma), UreB (beta) and UreC (alpha) subunits. Three heterotrimers associate to form the active enzyme. Requires Ni cation as cofactor. In terms of processing, carboxylation allows a single lysine to coordinate two nickel ions.

The protein resides in the cytoplasm. It carries out the reaction urea + 2 H2O + H(+) = hydrogencarbonate + 2 NH4(+). Its pathway is nitrogen metabolism; urea degradation; CO(2) and NH(3) from urea (urease route): step 1/1. The polypeptide is Urease subunit alpha (Laribacter hongkongensis (strain HLHK9)).